Here is a 322-residue protein sequence, read N- to C-terminus: MFEIHPVKKVSVVIPVYNEQESLPELIRRTTKACESLGKEYEILLIDDGSSDNSAHMLVEASQAENSHIVSILLNRNYGQHSAIMAGFSHVTGDLIITLDADLQNPPEEIPRLVAKADEGYDVVGTVRQNRQDSWFRKTASKMINRLIQRTTGKAMGDYGCMLRAYRRHIVDAMLHCHERSTFIPILANIFARRAIEIPVHHAEREFGESKYSFMRLINLMYDLVTCLTTTPLRMLSLLGSIIAIGGFSIAVLLVILRLTFGPQWAAEGVFMLFAVLFTFIGAQFIGMGLLGEYIGRIYTDVRARPRYFVQQVIRPSSKENE.

Residues 1–235 (MFEIHPVKKV…TCLTTTPLRM (235 aa)) are Cytoplasmic-facing. A helical membrane pass occupies residues 236–256 (LSLLGSIIAIGGFSIAVLLVI). Residues 257 to 269 (LRLTFGPQWAAEG) are Periplasmic-facing. The chain crosses the membrane as a helical span at residues 270-290 (VFMLFAVLFTFIGAQFIGMGL). Residues 291–322 (LGEYIGRIYTDVRARPRYFVQQVIRPSSKENE) are Cytoplasmic-facing.

It belongs to the glycosyltransferase 2 family.

Its subcellular location is the cell inner membrane. The catalysed reaction is UDP-4-deoxy-4-formamido-beta-L-arabinose + di-trans,octa-cis-undecaprenyl phosphate = 4-deoxy-4-formamido-alpha-L-arabinopyranosyl di-trans,octa-cis-undecaprenyl phosphate + UDP. Its pathway is glycolipid biosynthesis; 4-amino-4-deoxy-alpha-L-arabinose undecaprenyl phosphate biosynthesis; 4-amino-4-deoxy-alpha-L-arabinose undecaprenyl phosphate from UDP-4-deoxy-4-formamido-beta-L-arabinose and undecaprenyl phosphate: step 1/2. It functions in the pathway bacterial outer membrane biogenesis; lipopolysaccharide biosynthesis. Catalyzes the transfer of 4-deoxy-4-formamido-L-arabinose from UDP to undecaprenyl phosphate. The modified arabinose is attached to lipid A and is required for resistance to polymyxin and cationic antimicrobial peptides. The chain is Undecaprenyl-phosphate 4-deoxy-4-formamido-L-arabinose transferase from Escherichia coli O17:K52:H18 (strain UMN026 / ExPEC).